We begin with the raw amino-acid sequence, 403 residues long: Phosphopentomutase (403 aa).

Asp13, Asp298, His303, Asp339, His340, and His351 together coordinate Mn(2+).

It belongs to the phosphopentomutase family. The cofactor is Mn(2+).

The protein localises to the cytoplasm. The catalysed reaction is 2-deoxy-alpha-D-ribose 1-phosphate = 2-deoxy-D-ribose 5-phosphate. It catalyses the reaction alpha-D-ribose 1-phosphate = D-ribose 5-phosphate. It participates in carbohydrate degradation; 2-deoxy-D-ribose 1-phosphate degradation; D-glyceraldehyde 3-phosphate and acetaldehyde from 2-deoxy-alpha-D-ribose 1-phosphate: step 1/2. In terms of biological role, isomerase that catalyzes the conversion of deoxy-ribose 1-phosphate (dRib-1-P) and ribose 1-phosphate (Rib-1-P) to deoxy-ribose 5-phosphate (dRib-5-P) and ribose 5-phosphate (Rib-5-P), respectively. This is Phosphopentomutase from Streptococcus pneumoniae (strain Hungary19A-6).